Consider the following 1604-residue polypeptide: MVIKKPFIFIFICFLICLLICIDLTNCNTINNNNNNNNNNNNNNNNNNNNNNNNNNNNNNNNNNNNNDNNENHKILKDYLKFTKRFKKSEYPTTEQQDFYINKIKKEIKDREKYKNNIENEILKINSQKKRKKFKRKDLNTDIKTNHEQLRKLIENNVNPNPHYYDETQSFYFTNRMTSNNEKNNKKNLNFNNDNNKINNLINIKNNNIPYINNNNNNNNNNNNNNNNNNKNNNNNNNNKNNNNNNNNKNNNNNNNNKNNNKNKKIIINNNNLINNKLVSETSANMTTMVNSGDASLRSLINFLTTQDNNGLRFFPYSPRDLINPFNATKAISVAFAYNDRQLITPGAFSKENEEIRANQSRSQGLFDPNSPNMNFSSFYDIIDQQQTNFVQNIELSIDYLLNQVYFKEIFSKKDFKTQARDFEALFEFLKQQGTRVVYYYIANDGSNHVECGGSIKPCQDLAYLLQSVPMADRIQTDLVVFFYPGRYNITKRIVIDNFSKVQLVGLFGKDETTLTSNQKMFLFNNTHIHMIGLTIADVNFQMKPLLNIFKTDNLGTGTVFDLRQSIMTILLCDFRNISNRNSLGSVFAYNSNLTVSNTLFENTIAAVGGGIFCCSYSTCIVSNCTFRANIADNPIGGGALIASLSTLFITQSAFYNNKASIGGSVIIDGGFSTVDTSTFEYNTGFVGSAIQISPNSIVYIVNCYFYFNLATYSGASIFCGSSTVVFISKCIFKDNYSPGANGLESYSEKLVLIEESVFEGNIPPLLNSTSVVSIASPSAFLFVRQCSFFGHSGVIFNIGNPSVLYCSFSLFYENSNRIVNSFNNGLIVFGSCKLFNNSNNKSDGIFRINNRSNGIFYAVEFYNNTVSSFFESWFNSTCFLLSSNITNNTFRAGSFQVAFSTDIFVDNLLYSNNTAAEGGLISSDQTGGISVTNSLLIGNTAEFGNLVFFRLLSYSEPNCDSFIFENNTYVDNYAFMAGTIVYFDDTIRCNYSCINCVSVNNNAQYGEIVNTGFATFSSTLPNTIPPSIIRPIILQAFDALGLPYLGRSDITFNLLINLLICDQMSLTGVVQSTSTPTSFSVFYNVRISGAPGTHCNLTVIAFLKTFKNITLEYPITVVNCQEGQDPYNIGGVNSYYCLTDVSKTKIAKIIIGISAIIVSIGVLITAILTFIYRKRKIMRYSNPVFLLIILVGCVCGLVSTFVSFSTTSATCSIRMVLIPLFFFIITSAIFIKQYRVYCLIRGVEELHDMSIENSYLLKLQSFILIIPAILIAVSVIATRMHRKYNFDLQKETIQAYCYSKNFYIIFICLALYEFSILLYGCWIVIKCRQYRSFPGSFNEFFYIGVLIYVLTVILVVSIPIGFALLNSALTDFLLYSIPILVLIVAIIGLLFAPKFYFLFRTDKVIANLRQLIEDQEEILKKNKEVLFTYGMYLGDNNNDIIALHESFSDSDILSKTGSNTSDDVSDDFTFDSPTTYSNIPIPLNRRNNNNNNINNNNNNNNNNNNNNNNNNNNNNNNNILNNNKNNNNDDDASSSNSSSTADFEISSSGESGRSSNDYDKRNNKKNRRKNSLRTPILNSLLSPNSRNKTKKRNKSSQNSPLLD.

The first 27 residues, 1–27 (MVIKKPFIFIFICFLICLLICIDLTNC), serve as a signal peptide directing secretion. Residues 28–1149 (NTINNNNNNN…TDVSKTKIAK (1122 aa)) are Extracellular-facing. Positions 38–69 (NNNNNNNNNNNNNNNNNNNNNNNNNNNNNNDN) are enriched in low complexity. The interval 38–72 (NNNNNNNNNNNNNNNNNNNNNNNNNNNNNNDNNEN) is disordered. Residues 98–133 (DFYINKIKKEIKDREKYKNNIENEILKINSQKKRKK) adopt a coiled-coil conformation. Positions 213–263 (NNNNNNNNNNNNNNNNNNKNNNNNNNNKNNNNNNNNKNNNNNNNNKNNNKN) are disordered. N-linked (GlcNAc...) asparagine glycosylation is found at Asn-285, Asn-327, Asn-359, Asn-375, Asn-489, Asn-498, Asn-525, Asn-577, Asn-593, Asn-624, Asn-768, Asn-837, Asn-841, Asn-851, Asn-864, Asn-876, Asn-885, Asn-888, Asn-913, Asn-967, Asn-991, Asn-1097, and Asn-1109. Residues 1150–1170 (IIIGISAIIVSIGVLITAILT) form a helical membrane-spanning segment. Residues 1171 to 1184 (FIYRKRKIMRYSNP) lie on the Cytoplasmic side of the membrane. The chain crosses the membrane as a helical span at residues 1185–1205 (VFLLIILVGCVCGLVSTFVSF). Topologically, residues 1206 to 1211 (STTSAT) are extracellular. The helical transmembrane segment at 1212–1232 (CSIRMVLIPLFFFIITSAIFI) threads the bilayer. The Cytoplasmic portion of the chain corresponds to 1233 to 1256 (KQYRVYCLIRGVEELHDMSIENSY). The helical transmembrane segment at 1257–1277 (LLKLQSFILIIPAILIAVSVI) threads the bilayer. Residues 1278–1304 (ATRMHRKYNFDLQKETIQAYCYSKNFY) are Extracellular-facing. The chain crosses the membrane as a helical span at residues 1305 to 1325 (IIFICLALYEFSILLYGCWIV). The Cytoplasmic segment spans residues 1326 to 1340 (IKCRQYRSFPGSFNE). The helical transmembrane segment at 1341–1361 (FFYIGVLIYVLTVILVVSIPI) threads the bilayer. Topologically, residues 1362–1372 (GFALLNSALTD) are extracellular. A helical membrane pass occupies residues 1373–1393 (FLLYSIPILVLIVAIIGLLFA). At 1394 to 1604 (PKFYFLFRTD…KSSQNSPLLD (211 aa)) the chain is on the cytoplasmic side. Positions 1457–1604 (TGSNTSDDVS…KSSQNSPLLD (148 aa)) are disordered. 2 stretches are compositionally biased toward low complexity: residues 1471 to 1527 (FDSP…NKNN) and 1534 to 1556 (SSSN…GRSS). The span at 1563 to 1572 (NNKKNRRKNS) shows a compositional bias: basic residues. Residues 1573–1584 (LRTPILNSLLSP) show a composition bias toward polar residues.

It belongs to the G-protein coupled receptor 3 family. GABA-B receptor subfamily.

The protein localises to the membrane. The sequence is that of Metabotropic glutamate receptor-like protein R (grlR) from Dictyostelium discoideum (Social amoeba).